An 81-amino-acid polypeptide reads, in one-letter code: Beta-catenin-interacting protein 1 (81 aa).

Ser59 bears the Phosphoserine mark.

This sequence belongs to the CTNNBIP1 family. In terms of assembly, binds CTNNB1.

Its subcellular location is the cytoplasm. The protein resides in the nucleus. Functionally, prevents the interaction between CTNNB1 and TCF family members, and acts as a negative regulator of the Wnt signaling pathway. This Bos taurus (Bovine) protein is Beta-catenin-interacting protein 1 (CTNNBIP1).